Here is a 285-residue protein sequence, read N- to C-terminus: Acrosomal protein SP-10 (285 aa).

An N-terminal signal peptide occupies residues 1 to 21 (MNMFLLLMSLYLLGSARGTSG). A disordered region spans residues 64–200 (TLSEHGSSEH…GEQPSGAPIS (137 aa)). 19 consecutive repeat copies span residues 66–70 (SEHGS), 71–75 (SEHGS), 85–89 (PGEHA), 91–95 (SEHAS), 110–114 (VGEQP), 115–119 (SGEQP), 120–124 (SGEHL), 125–129 (SGEQS), 130–134 (LGEHA), 135–139 (SGEQP), 145–149 (SGEHA), 150–154 (SGEQP), 155–159 (SGEHA), 160–164 (SGEQP), 165–169 (SGEQP), 170–174 (SGEHA), 175–179 (SGEQS), 180–184 (LGEHA), and 190–194 (SGEQP). Residues 66-95 (SEHGSSEHGSREHTVAEHTPGEHAESEHAS) form a 3 X 5 AA repeats of S-E-H-[GA]-A region. The segment covering 69 to 95 (GSSEHGSREHTVAEHTPGEHAESEHAS) has biased composition (basic and acidic residues). A 7 X 5 AA repeats of S-G-E-H-[AL] region spans residues 85 to 184 (PGEHAESEHA…SGEQSLGEHA (100 aa)). The 9 X 5 AA repeats of [SV]-G-E-Q-[PSA] stretch occupies residues 110–194 (VGEQPSGEQP…LSEKPSGEQP (85 aa)). Asn-278 carries N-linked (GlcNAc...) asparagine glycosylation.

As to expression, testis.

The protein localises to the cytoplasmic vesicle. Its subcellular location is the secretory vesicle. It is found in the acrosome. This chain is Acrosomal protein SP-10 (ACRV1), found in Papio hamadryas (Hamadryas baboon).